We begin with the raw amino-acid sequence, 122 residues long: Large ribosomal subunit protein uL14 (122 aa).

The protein belongs to the universal ribosomal protein uL14 family. As to quaternary structure, part of the 50S ribosomal subunit. Forms a cluster with proteins L3 and L19. In the 70S ribosome, L14 and L19 interact and together make contacts with the 16S rRNA in bridges B5 and B8.

Its function is as follows. Binds to 23S rRNA. Forms part of two intersubunit bridges in the 70S ribosome. The polypeptide is Large ribosomal subunit protein uL14 (Streptococcus thermophilus (strain CNRZ 1066)).